A 311-amino-acid polypeptide reads, in one-letter code: Deacetoxycephalosporin C synthase (311 aa).

The Fe2OG dioxygenase domain maps to 154 to 267; that stretch reads DCEPLLRFRY…RTSSVFFLRP (114 aa).

This sequence belongs to the iron/ascorbate-dependent oxidoreductase family. The cofactor is Fe cation. L-ascorbate is required as a cofactor.

The catalysed reaction is penicillin N + 2-oxoglutarate + O2 = deacetoxycephalosporin C + succinate + CO2 + H2O. It functions in the pathway antibiotic biosynthesis; cephalosporin C biosynthesis. Its function is as follows. Catalyzes the step from penicillin N to deacetoxy-cephalosporin C. The polypeptide is Deacetoxycephalosporin C synthase (cefE) (Streptomyces clavuligerus).